The following is a 4660-amino-acid chain: Low-density lipoprotein receptor-related protein 2 (4660 aa).

The first 25 residues, 1–25, serve as a signal peptide directing secretion; that stretch reads MERGAAAAAWMLLLAIAACLEPVSS. Residues 26-4425 are Extracellular-facing; the sequence is QECGSGNFRC…LSRGIPPGTT (4400 aa). LDL-receptor class A domains are found at residues 27–63, 66–104, 107–143, 141–180, 182–218, and 221–257; these read ECGS…IGCP, SCES…QNCA, TCSA…RNCH, NCHY…ANCT, LCSQ…RNCN, and TCGG…DGCE. Intrachain disulfides connect Cys-28/Cys-40, Cys-35/Cys-53, Cys-47/Cys-62, Cys-67/Cys-80, Cys-74/Cys-93, Cys-87/Cys-103, Cys-108/Cys-120, Cys-115/Cys-133, Cys-127/Cys-142, Cys-142/Cys-157, Cys-152/Cys-170, Cys-164/Cys-179, Cys-183/Cys-195, Cys-190/Cys-208, Cys-202/Cys-217, Cys-222/Cys-234, Cys-229/Cys-247, and Cys-241/Cys-256. 2 N-linked (GlcNAc...) asparagine glycosylation sites follow: Asn-159 and Asn-178. N-linked (GlcNAc...) asparagine glycosylation is present at Asn-259. The 44-residue stretch at 264 to 307 folds into the LDL-receptor class A 7 domain; it reads RCYPREWACPGSGRCISIDKVCDGVPDCPEGDDENNVTSGRTCG. 3 disulfide bridges follow: Cys-265-Cys-278, Cys-272-Cys-291, and Cys-285-Cys-306. N-linked (GlcNAc...) asparagine glycans are attached at residues Asn-299 and Asn-340. One can recognise an EGF-like 1; calcium-binding domain in the interval 347 to 382; the sequence is DFDDCQIWGICDQKCENRQGRHQCLCEEGYILERGQ. Disulfide bonds link Cys-351/Cys-361 and Cys-357/Cys-370. LDL-receptor class B repeat units follow at residues 435–477, 478–520, 521–567, and 568–612; these read HRVF…DWIN, NKLY…DPTV, GYLF…DLVS, and KRVY…FEEH. An N-linked (GlcNAc...) asparagine glycan is attached at Asn-462. Asn-657 carries N-linked (GlcNAc...) asparagine glycosylation. LDL-receptor class B repeat units follow at residues 752–794, 795–836, 837–880, and 881–924; these read STVF…DWIS, RNLY…HPTA, GYMF…DWSA, and SRLY…FKDN. N-linked (GlcNAc...) asparagine glycosylation occurs at Asn-865. Residues 1024–1060 form the LDL-receptor class A 8 domain; that stretch reads QCGSLSFPCNNGKCVPSFFRCDGVDDCHDNSDEHQCG. Cystine bridges form between Cys-1025-Cys-1037, Cys-1032-Cys-1050, and Cys-1044-Cys-1059. A glycan (N-linked (GlcNAc...) asparagine) is linked at Asn-1063. 7 consecutive LDL-receptor class A domains span residues 1065–1102, 1109–1145, 1149–1185, 1187–1224, 1230–1268, 1271–1307, and 1312–1350; these read TCSP…QNCP, TCPS…KNCQ, TCQP…AGCV, NCTS…AGCP, MCHP…TGCV, TCSP…KDCP, and HCPS…PLCN. Intrachain disulfides connect Cys-1066–Cys-1079, Cys-1073–Cys-1092, Cys-1086–Cys-1101, Cys-1110–Cys-1122, Cys-1117–Cys-1135, Cys-1129–Cys-1144, Cys-1150–Cys-1162, Cys-1157–Cys-1175, and Cys-1169–Cys-1184. Residues Trp-1127, Asp-1130, Asp-1132, Asp-1134, Asp-1140, and Glu-1141 each contribute to the Ca(2+) site. The N-linked (GlcNAc...) asparagine glycan is linked to Asn-1187. Disulfide bonds link Cys-1188–Cys-1201, Cys-1195–Cys-1214, Cys-1208–Cys-1223, Cys-1231–Cys-1244, Cys-1238–Cys-1257, Cys-1251–Cys-1267, Cys-1272–Cys-1284, Cys-1279–Cys-1297, Cys-1291–Cys-1306, Cys-1313–Cys-1326, Cys-1320–Cys-1339, Cys-1333–Cys-1349, Cys-1354–Cys-1365, Cys-1361–Cys-1374, Cys-1376–Cys-1389, Cys-1395–Cys-1405, Cys-1401–Cys-1414, and Cys-1416–Cys-1429. Residues Tyr-1206, Asp-1209, Val-1211, Asp-1213, Asp-1219, and Glu-1220 each coordinate Ca(2+). Asn-1328 and Asn-1341 each carry an N-linked (GlcNAc...) asparagine glycan. The EGF-like 2 domain occupies 1350–1390; that stretch reads NQDSCSHFNGGCTHQCMQGPFGATCLCPLGYQLANDTKTCE. N-linked (GlcNAc...) asparagine glycosylation occurs at Asn-1384. Positions 1391-1430 constitute an EGF-like 3; calcium-binding domain; it reads DINECDIPGFCSQHCVNMRGSFRCACDPEYTLESDGRTCK. 3 N-linked (GlcNAc...) asparagine glycosylation sites follow: Asn-1451, Asn-1497, and Asn-1551. LDL-receptor class B repeat units lie at residues 1479-1521, 1522-1564, 1567-1610, 1611-1655, and 1656-1696; these read GRVF…DWIG, RNLY…DPRM, NVMF…DYPN, RLIY…FEDF, and VYWT…IHPS. N-linked (GlcNAc...) asparagine glycosylation is found at Asn-1676, Asn-1733, and Asn-1811. LDL-receptor class B repeat units lie at residues 1791 to 1833, 1834 to 1883, 1884 to 1931, 1932 to 1973, 1974 to 2014, 2108 to 2157, 2158 to 2202, 2203 to 2246, and 2247 to 2290; these read QFIY…DWVS, RNIY…DPAR, GKLY…DIQE, QKLY…YGSF, LYYS…YHRR, GFIY…DWAA, GNLY…DPKH, RYLF…DHDT, and GYIY…FGES. N-linked (GlcNAc...) asparagine glycans are attached at residues Asn-2134, Asn-2178, and Asn-2225. Asn-2396 carries an N-linked (GlcNAc...) asparagine glycan. LDL-receptor class B repeat units follow at residues 2432–2478, 2479–2519, 2520–2563, 2564–2605, and 2606–2647; these read NRIF…DWIN, RRIY…DPCR, GYMY…DLET, DLLY…YGQY, and IYWT…VVKT. Asn-2488 and Asn-2548 each carry an N-linked (GlcNAc...) asparagine glycan. 10 consecutive LDL-receptor class A domains span residues 2700-2738, 2741-2777, 2780-2819, 2822-2861, 2864-2902, 2907-2946, 2949-2991, 2994-3030, 3033-3071, and 3076-3112; these read RCNQ…TVCA, TCRS…AGCL, NCNS…KNCP, TCPP…IYCA, TCRS…DTCG, TCRA…HHCE, NCSS…QNCT, TCSA…RGCS, PCHA…HLCH, and TCPL…KGCG. 18 cysteine pairs are disulfide-bonded: Cys-2701–Cys-2713, Cys-2708–Cys-2726, Cys-2720–Cys-2737, Cys-2742–Cys-2754, Cys-2749–Cys-2767, Cys-2761–Cys-2776, Cys-2781–Cys-2794, Cys-2789–Cys-2807, Cys-2801–Cys-2818, Cys-2823–Cys-2836, Cys-2830–Cys-2849, Cys-2843–Cys-2860, Cys-2865–Cys-2878, Cys-2872–Cys-2891, Cys-2885–Cys-2901, Cys-2908–Cys-2920, Cys-2915–Cys-2933, and Cys-2927–Cys-2945. Residue Asn-2782 is glycosylated (N-linked (GlcNAc...) asparagine). Residue Asn-2810 is glycosylated (N-linked (GlcNAc...) asparagine). Asn-2949 carries an N-linked (GlcNAc...) asparagine glycan. 18 cysteine pairs are disulfide-bonded: Cys-2950–Cys-2967, Cys-2957–Cys-2980, Cys-2974–Cys-2990, Cys-2995–Cys-3007, Cys-3002–Cys-3020, Cys-3014–Cys-3029, Cys-3034–Cys-3046, Cys-3041–Cys-3059, Cys-3053–Cys-3070, Cys-3077–Cys-3089, Cys-3084–Cys-3102, Cys-3096–Cys-3111, Cys-3116–Cys-3128, Cys-3124–Cys-3137, Cys-3139–Cys-3152, Cys-3158–Cys-3169, Cys-3165–Cys-3178, and Cys-3180–Cys-3193. Asn-2989 is a glycosylation site (N-linked (GlcNAc...) asparagine). Residues 3112-3153 enclose the EGF-like 4 domain; sequence GINECLDSSISRCDHNCTDTITSFYCSCLPGYKLMSDKRSCV. An N-linked (GlcNAc...) asparagine glycan is attached at Asn-3127. An EGF-like 5; calcium-binding domain is found at 3154–3194; it reads DIDECKESPQLCSQKCENVVGSYICKCAPGYIREPDGKSCR. 4 N-linked (GlcNAc...) asparagine glycosylation sites follow: Asn-3213, Asn-3259, Asn-3317, and Asn-3357. LDL-receptor class B repeat units follow at residues 3241-3283, 3284-3326, 3335-3378, 3379-3421, and 3422-3462; these read KRLY…DWVS, RKLY…EHPR, GHVY…DYTN, DLLY…FEDT, and VFWT…YHPY. Residue Asn-3448 is glycosylated (N-linked (GlcNAc...) asparagine). 8 consecutive LDL-receptor class A domains span residues 3513–3551, 3554–3592, 3595–3633, 3636–3674, 3679–3717, 3720–3757, 3760–3796, and 3799–3835; these read MCSS…DLCP, FCRL…VLCE, RCES…SHCA, TCRP…DECT, NCDN…QGCE, PCHP…ENCV, ECSE…RDCE, and TCHP…SACP. Cystine bridges form between Cys-3514-Cys-3527, Cys-3521-Cys-3540, Cys-3534-Cys-3550, Cys-3555-Cys-3567, Cys-3562-Cys-3580, Cys-3574-Cys-3591, Cys-3596-Cys-3608, Cys-3603-Cys-3621, Cys-3615-Cys-3632, Cys-3637-Cys-3649, Cys-3644-Cys-3662, Cys-3656-Cys-3673, Cys-3680-Cys-3694, Cys-3688-Cys-3707, Cys-3701-Cys-3716, Cys-3721-Cys-3734, Cys-3729-Cys-3747, Cys-3741-Cys-3756, Cys-3761-Cys-3773, Cys-3768-Cys-3786, Cys-3780-Cys-3795, Cys-3800-Cys-3812, Cys-3807-Cys-3825, and Cys-3819-Cys-3834. Asn-3566 carries N-linked (GlcNAc...) asparagine glycosylation. A glycan (N-linked (GlcNAc...) asparagine) is linked at Asn-3682. N-linked (GlcNAc...) asparagine glycosylation is present at Asn-3840. 3 consecutive LDL-receptor class A domains span residues 3843 to 3881, 3884 to 3923, and 3929 to 3965; these read YCPA…HLCF, PCES…EHCR, and PCTD…TGCN. 9 disulfides stabilise this stretch: Cys-3844–Cys-3856, Cys-3851–Cys-3869, Cys-3863–Cys-3880, Cys-3885–Cys-3898, Cys-3893–Cys-3911, Cys-3905–Cys-3922, Cys-3930–Cys-3942, Cys-3937–Cys-3955, and Cys-3949–Cys-3964. Residues 3968–4003 form the EGF-like 6 domain; that stretch reads DNRTCAENICEQNCTQLSSGGFICSCRPGFKPSTSD. N-linked (GlcNAc...) asparagine glycans are attached at residues Asn-3969 and Asn-3980. Disulfide bonds link Cys-3972–Cys-3981, Cys-3977–Cys-3991, Cys-4013–Cys-4023, Cys-4019–Cys-4032, and Cys-4034–Cys-4049. The EGF-like 7; calcium-binding domain occupies 4009 to 4050; the sequence is DINECEEFGICPQSCRNSKGSYECFCVDGFKSMSTHYGERCA. Residue Asn-4070 is glycosylated (N-linked (GlcNAc...) asparagine). 3 LDL-receptor class B repeats span residues 4156–4198, 4199–4242, and 4244–4285; these read RHIY…NPKL, GLMF…DYLN, and DRVY…FEDK. Residue Asn-4329 is glycosylated (N-linked (GlcNAc...) asparagine). One can recognise an EGF-like 8 domain in the interval 4379–4413; that stretch reads MPPPCRCMHGGNCYFDENELPKCKCSSGYSGEYCE. 3 disulfides stabilise this stretch: Cys-4383/Cys-4391, Cys-4385/Cys-4401, and Cys-4403/Cys-4412. A helical transmembrane segment spans residues 4426–4446; it reads MAVLLTFVIVIIVGALVLVGL. Over 4447 to 4660 the chain is Cytoplasmic; that stretch reads FHYRKTGSLL…ANLVKEDSDV (214 aa). Residues 4454–4463 carry the SH3-binding motif; the sequence is SLLPTLPKLP. Positions 4457–4462 match the PxLPxI/L motif 1; mediates interaction with ANKRA2 motif; it reads PTLPKL. Residues 4460–4465 carry the PxLPxI/L motif 2; mediates interaction with ANKRA2 motif; it reads PKLPSL. Phosphoserine occurs at positions 4464 and 4467. Residues 4522-4527 carry the Endocytosis signal motif; the sequence is FENPMY. Residues 4559–4582 form a disordered region; the sequence is NYGRPIDPSEIVPEPKPASPGADE. At Ser-4577 the chain carries Phosphoserine. The interaction with DAB2 stretch occupies residues 4597–4610; it reads QTTNFENPIYAEMD. The short motif at 4603–4606 is the NPXY motif element; that stretch reads NPIY. The SH2-binding motif lies at 4606 to 4609; it reads YAEM. The tract at residues 4617–4660 is disordered; that stretch reads VAVAPPPSPSLPAKASKRNLTPGYTATEDTFKDTANLVKEDSDV. The short motif at 4619-4630 is the SH3-binding element; sequence VAPPPSPSLPAK. Ser-4624 bears the Phosphoserine mark. The segment covering 4634–4644 has biased composition (polar residues); sequence RNLTPGYTATE. Thr-4637 bears the Phosphothreonine mark. Ser-4658 carries the phosphoserine modification.

This sequence belongs to the LDLR family. As to quaternary structure, binds plasminogen, extracellular matrix components, plasminogen activator-plasminogen activator inhibitor type I complex, apolipoprotein E-enriched beta-VLDL, lipoprotein lipase, lactoferrin, CLU/clusterin and calcium. Forms a multimeric complex together with LRPAP1. Interacts (via PxLPxI/L motif) with ANKRA2 (via ankyrin repeats). Interacts with LRP2BP. Interacts (via NPXY motif) with DAB2; the interaction is not affected by tyrosine phosphorylation of the NPXY motif. Interacts with MB. Interacts with BMP4. Interacts with the Sonic hedgehog protein N-product which is the active product of SHH. Interacts with CST3 in a calcium-dependent manner. Interacts with the vitamin-D binding protein GC/DBP. Interacts with sex hormone-binding protein SHBG. Interacts with angiotensin-2. Also interacts with angiotensin 1-7. Interacts with APOM. Interacts with selenoprotein SEPP1. Interacts with LEP. Interacts with ALB. Interacts with the antiapoptotic protein BIRC5/survivin. Interacts with matrix metalloproteinase MMP2 in complex with metalloproteinase inhibitor TIMP1. In neurons, forms a trimeric complex with APP and APPB1/FE65. Interacts with LDLRAP1/ARH; mediates trafficking of LRP2 to the endocytic recycling compartment. Does not interact with beta-amyloid protein 40 alone but interacts with the complex composed of beta-amyloid protein 40 and CLU/APOJ. Interacts with MDK. In terms of processing, a fraction undergoes proteolytic cleavage of the extracellular domain at the cell membrane to generate a cytoplasmic tail fragment. This is internalized into the early endosome from where it trafficks in an LDLRAP1/ARH-dependent manner to the endocytic recycling compartment (ERC). In the ERC, it is further cleaved by gamma-secretase to release a fragment which translocates to the nucleus and mediates transcriptional repression. Post-translationally, N-glycosylation is required for ligand binding. As to expression, in the inner ear, expressed in the lumen of the endolymphatic sac where it localizes to macrophage-like cells as well as to mitochondria-rich and ribosome-rich epithelial cells (at protein level). In the inner ear, expressed in marginal cells of the stria vascularis, epithelial cells at the spiral prominence, epithelial cells of Reissner's membrane facing the cochlear duct, and Kolliker's organ (at protein level). Expressed in the choroid plexus epithelium in the brain (at protein level). In the brain, also expressed in astrocytes (at protein level). Expression also detected in epithelial cells of the kidney glomerulus and proximal tubule, lung, epididymis and yolk sac.

It localises to the apical cell membrane. It is found in the endosome lumen. Its subcellular location is the membrane. The protein localises to the clathrin-coated pit. The protein resides in the cell projection. It localises to the dendrite. It is found in the axon. In terms of biological role, multiligand endocytic receptor. Acts together with CUBN to mediate endocytosis of high-density lipoproteins. Mediates receptor-mediated uptake of polybasic drugs such as aprotinin, aminoglycosides and polymyxin B. In the kidney, mediates the tubular uptake and clearance of leptin. Also mediates transport of leptin across the blood-brain barrier through endocytosis at the choroid plexus epithelium. Endocytosis of leptin in neuronal cells is required for hypothalamic leptin signaling and leptin-mediated regulation of feeding and body weight. Mediates endocytosis and subsequent lysosomal degradation of CST3 in kidney proximal tubule cells. Mediates renal uptake of 25-hydroxyvitamin D3 in complex with the vitamin D3 transporter GC/DBP. Mediates renal uptake of metallothionein-bound heavy metals. Together with CUBN, mediates renal reabsorption of myoglobin. Mediates renal uptake and subsequent lysosomal degradation of APOM. Plays a role in kidney selenium homeostasis by mediating renal endocytosis of selenoprotein SEPP1. Mediates renal uptake of the antiapoptotic protein BIRC5/survivin which may be important for functional integrity of the kidney. Mediates renal uptake of matrix metalloproteinase MMP2 in complex with metalloproteinase inhibitor TIMP1. Mediates endocytosis of Sonic hedgehog protein N-product (ShhN), the active product of SHH. Also mediates ShhN transcytosis. In the embryonic neuroepithelium, mediates endocytic uptake and degradation of BMP4, is required for correct SHH localization in the ventral neural tube and plays a role in patterning of the ventral telencephalon. Required at the onset of neurulation to sequester SHH on the apical surface of neuroepithelial cells of the rostral diencephalon ventral midline and to control PTCH1-dependent uptake and intracellular trafficking of SHH. During neurulation, required in neuroepithelial cells for uptake of folate bound to the folate receptor FOLR1 which is necessary for neural tube closure. In the adult brain, negatively regulates BMP signaling in the subependymal zone which enables neurogenesis to proceed. In astrocytes, mediates endocytosis of ALB which is required for the synthesis of the neurotrophic factor oleic acid. Involved in neurite branching. During optic nerve development, required for SHH-mediated migration and proliferation of oligodendrocyte precursor cells. Mediates endocytic uptake and clearance of SHH in the retinal margin which protects retinal progenitor cells from mitogenic stimuli and keeps them quiescent. Plays a role in reproductive organ development by mediating uptake in reproductive tissues of androgen and estrogen bound to the sex hormone binding protein SHBG. Mediates endocytosis of angiotensin-2. Also mediates endocytosis of angiotensin 1-7. Binds to the complex composed of beta-amyloid protein 40 and CLU/APOJ and mediates its endocytosis and lysosomal degradation. Required for embryonic heart development. Required for normal hearing, possibly through interaction with estrogen in the inner ear. The polypeptide is Low-density lipoprotein receptor-related protein 2 (Lrp2) (Rattus norvegicus (Rat)).